The chain runs to 143 residues: Polyadenylate-binding protein-interacting protein 2 (143 aa).

The PAM2-like motif lies at 11 to 21 (TLNPNAPVFDP).

The polypeptide is Polyadenylate-binding protein-interacting protein 2 (CID2) (Arabidopsis thaliana (Mouse-ear cress)).